Consider the following 1379-residue polypeptide: DNA-directed RNA polymerase subunit beta (1379 aa).

Belongs to the RNA polymerase beta chain family. In terms of assembly, the RNAP catalytic core consists of 2 alpha, 1 beta, 1 beta' and 1 omega subunit. When a sigma factor is associated with the core the holoenzyme is formed, which can initiate transcription.

It carries out the reaction RNA(n) + a ribonucleoside 5'-triphosphate = RNA(n+1) + diphosphate. Functionally, DNA-dependent RNA polymerase catalyzes the transcription of DNA into RNA using the four ribonucleoside triphosphates as substrates. This chain is DNA-directed RNA polymerase subunit beta, found in Ruegeria sp. (strain TM1040) (Silicibacter sp.).